Here is a 162-residue protein sequence, read N- to C-terminus: uncharacterized protein (162 aa).

Positions 1-24 (MCKRFKFLLAVSALFISITVVLAG) are cleaved as a signal peptide. The N-palmitoyl cysteine moiety is linked to residue C25. C25 is lipidated: S-diacylglycerol cysteine.

The protein resides in the cell membrane. This is an uncharacterized protein from Bacillus anthracis.